Reading from the N-terminus, the 117-residue chain is Large ribosomal subunit protein uL18 (117 aa).

It belongs to the universal ribosomal protein uL18 family. Part of the 50S ribosomal subunit; part of the 5S rRNA/L5/L18/L25 subcomplex. Contacts the 5S and 23S rRNAs.

Its function is as follows. This is one of the proteins that bind and probably mediate the attachment of the 5S RNA into the large ribosomal subunit, where it forms part of the central protuberance. This Thioalkalivibrio sulfidiphilus (strain HL-EbGR7) protein is Large ribosomal subunit protein uL18.